Reading from the N-terminus, the 746-residue chain is Histone-lysine N-methyltransferase EZH2 (746 aa).

Residues 1–340 (MGQTGKKSEK…AKEFAAALTA (340 aa)) are interaction with DNMT1, DNMT3A and DNMT3B. The residue at position 21 (Ser21) is a Phosphoserine; by PKB/AKT1. An interaction with EED region spans residues 39-68 (KTMFSSNRQKILERTETLNQEWKQRRIQPV). Ser75 carries O-linked (GlcNAc) serine glycosylation. Position 76 is a phosphoserine (Ser76). The segment at 180-217 (QYNDDDDDDDGDDPDEREEKQKDLEDNRDDKETCPPRK) is disordered. Acidic residues predominate over residues 182–195 (NDDDDDDDGDDPDE). Positions 196–217 (REEKQKDLEDNRDDKETCPPRK) are enriched in basic and acidic residues. The tract at residues 329 to 522 (EGAKEFAAAL…SSNHVYNYQP (194 aa)) is interaction with CDYL. Position 339 is a phosphothreonine (Thr339). A disordered region spans residues 340–426 (AERIKTPPKR…PIKMKPNIEP (87 aa)). Thr345 is modified (phosphothreonine; by CDK1 and CDK2). The span at 345–357 (TPPKRPGGRRRGR) shows a compositional bias: basic residues. Phosphoserine occurs at positions 363 and 366. Residue Thr367 is modified to Phosphothreonine. Over residues 374–385 (ESKDTDSDREAG) the composition is skewed to basic and acidic residues. Position 487 is a phosphothreonine (Thr487). The CXC domain occupies 503 to 605 (CRKIQLKKDG…SKNVSCKNCS (103 aa)). The region spanning 612-727 (KHLLLAPSDV…TGEELFFDYR (116 aa)) is the SET domain. Residue Lys634 forms a Glycyl lysine isopeptide (Lys-Gly) (interchain with G-Cter in SUMO2) linkage.

The protein belongs to the class V-like SAM-binding methyltransferase superfamily. Histone-lysine methyltransferase family. EZ subfamily. Component of the PRC2/EED-EZH2 complex, which includes EED, EZH2, SUZ12, RBBP4 and RBBP7 and possibly AEBP2. The minimum components required for methyltransferase activity of the PRC2/EED-EZH2 complex are EED, EZH2 and SUZ12. The PRC2 complex may also interact with DNMT1, DNMT3A, DNMT3B and PHF1 via the EZH2 subunit and with SIRT1 via the SUZ12 subunit. Interacts with HDAC1 and HDAC2. Binds ATRX via the SET domain. Interacts with PRAME. Interacts with CDYL. Interacts with EED. Interacts with BMAL1. Interacts with CLOCK and CRY1. Interacts with DNMT3L; the interaction is direct. Interacts with EZHIP; the interaction blocks EZH2 methyltransferase activity. Interacts with ZNF263; recruited to the SIX3 promoter along with other proteins involved in chromatin modification and transcriptional corepression where it contributes to transcriptional repression. Interacts with ARMC12. Interacts with ZMYND8; the interaction is dependent on the presence of chromatin. Interacts with DDX18; this interaction inhibits the PRC2 complex. Phosphorylated by AKT1. Phosphorylation by AKT1 reduces methyltransferase activity. Phosphorylation at Thr-345 by CDK1 and CDK2 promotes maintenance of H3K27me3 levels at EZH2-target loci, thus leading to epigenetic gene silencing. In terms of processing, sumoylated. Post-translationally, glycosylated: O-GlcNAcylation at Ser-75 by OGT increases stability of EZH2 and facilitates the formation of H3K27me3 by the PRC2/EED-EZH2 complex. As to expression, present in actively dividing cells. Widely expressed in early embryos. In later embryogenesis, expression restricted to central and peripheral nervous system, liver and thymus. In adult, highest expression in spleen, testis and placenta. Lower levels in intestine, muscle and ovary and very low levels in brain and liver. No expression in heart, thyroid gland, lung and kidney.

The protein localises to the nucleus. Its subcellular location is the chromosome. The catalysed reaction is L-lysyl(27)-[histone H3] + 3 S-adenosyl-L-methionine = N(6),N(6),N(6)-trimethyl-L-lysyl(27)-[histone H3] + 3 S-adenosyl-L-homocysteine + 3 H(+). In terms of biological role, polycomb group (PcG) protein. Catalytic subunit of the PRC2/EED-EZH2 complex, which methylates (H3K9me) and 'Lys-27' (H3K27me) of histone H3, leading to transcriptional repression of the affected target gene. Able to mono-, di- and trimethylate 'Lys-27' of histone H3 to form H3K27me1, H3K27me2 and H3K27me3, respectively. Displays a preference for substrates with less methylation, loses activity when progressively more methyl groups are incorporated into H3K27, H3K27me0 &gt; H3K27me1 &gt; H3K27me2. Compared to EZH1-containing complexes, it is more abundant in embryonic stem cells and plays a major role in forming H3K27me3, which is required for embryonic stem cell identity and proper differentiation. The PRC2/EED-EZH2 complex may also serve as a recruiting platform for DNA methyltransferases, thereby linking two epigenetic repression systems. Genes repressed by the PRC2/EED-EZH2 complex include HOXA7, HOXB6 and HOXC8. EZH2 can also methylate non-histone proteins such as the transcription factor GATA4 and the nuclear receptor RORA. Regulates the circadian clock via histone methylation at the promoter of the circadian genes. Essential for the CRY1/2-mediated repression of the transcriptional activation of PER1/2 by the CLOCK-BMAL1 heterodimer; involved in the di and trimethylation of 'Lys-27' of histone H3 on PER1/2 promoters which is necessary for the CRY1/2 proteins to inhibit transcription. The sequence is that of Histone-lysine N-methyltransferase EZH2 from Mus musculus (Mouse).